We begin with the raw amino-acid sequence, 422 residues long: BTB/POZ domain-containing protein KCTD18 (422 aa).

The region spanning 12–80 is the BTB domain; the sequence is DILRLNVGGC…YLHGEVHIPT (69 aa). Disordered regions lie at residues 289–357 and 376–422; these read VKNS…THLP and LRRT…DQTK. The segment covering 396 to 406 has biased composition (pro residues); sequence PAGPPEPPPDA. Residues 413-422 show a composition bias toward polar residues; it reads WTENGQDQTK.

The polypeptide is BTB/POZ domain-containing protein KCTD18 (KCTD18) (Bos taurus (Bovine)).